The sequence spans 50 residues: Photosystem II reaction center protein M (50 aa).

The chain crosses the membrane as a helical span at residues 7–27; the sequence is GFIISLLFVGIPTIFLVGLYI. Residues 31-50 are disordered; it reads DGEKSSFFSDSSKGKLGPKS.

Belongs to the PsbM family. As to quaternary structure, PSII is composed of 1 copy each of membrane proteins PsbA, PsbB, PsbC, PsbD, PsbE, PsbF, PsbH, PsbI, PsbJ, PsbK, PsbL, PsbM, PsbT, PsbX, PsbY, Psb30/Ycf12, peripheral proteins PsbO, CyanoQ (PsbQ), PsbU, PsbV and a large number of cofactors. It forms dimeric complexes.

It localises to the cellular thylakoid membrane. Functionally, one of the components of the core complex of photosystem II (PSII). PSII is a light-driven water:plastoquinone oxidoreductase that uses light energy to abstract electrons from H(2)O, generating O(2) and a proton gradient subsequently used for ATP formation. It consists of a core antenna complex that captures photons, and an electron transfer chain that converts photonic excitation into a charge separation. This subunit is found at the monomer-monomer interface. The polypeptide is Photosystem II reaction center protein M (Prochlorococcus marinus (strain SARG / CCMP1375 / SS120)).